The following is a 301-amino-acid chain: uncharacterized protein (301 aa).

Positions 45-286 (KELSDGWALN…EELGKMFTEL (242 aa)) constitute a Radical SAM core domain.

This is an uncharacterized protein from Acidianus two-tailed virus (ATV).